The following is a 368-amino-acid chain: Biglycan (368 aa).

The first 16 residues, 1–16 (MWPLWRLVSLLALSQA), serve as a signal peptide directing secretion. A propeptide spanning residues 17 to 37 (LPFEQRGFWDFTLDDGPFMMN) is cleaved from the precursor. 2 O-linked (Xyl...) (glycosaminoglycan) serine glycosylation sites follow: Ser42 and Ser47. 2 cysteine pairs are disulfide-bonded: Cys63–Cys69 and Cys67–Cys76. LRR repeat units follow at residues 82–102 (KSVP…NNDI), 103–126 (SELR…NNKI), 127–150 (SKIH…KNHL), 151–171 (VEIP…DNRI), 172–195 (RKVP…GNPL), 196–220 (ENSG…EAKL), 221–241 (TGIP…HNKI), 242–265 (QAIE…HNQI), 266–289 (RMIE…NNKL), 290–312 (ARVP…SNNI), 313–342 (TKVG…NNPV), and 343–368 (PYWE…NYKK). Ser180 and Ser198 each carry an O-linked (Xyl...) (glycosaminoglycan) serine glycan. Asn270 and Asn311 each carry an N-linked (GlcNAc...) asparagine glycan. Residues Cys321 and Cys354 are joined by a disulfide bond.

It belongs to the small leucine-rich proteoglycan (SLRP) family. SLRP class I subfamily. In terms of assembly, homodimer. Forms a ternary complex with MFAP2 and ELN. The two attached glycosaminoglycan chains can be either chondroitin sulfate or dermatan sulfate. Detected in placenta (at protein level). Found in several connective tissues, especially in articular cartilages.

It localises to the secreted. It is found in the extracellular space. The protein localises to the extracellular matrix. May be involved in collagen fiber assembly. The sequence is that of Biglycan (BGN) from Homo sapiens (Human).